Consider the following 396-residue polypeptide: MASHIRGNLTEEQLKRIEANRKRALERLQQKKKKDAGEHVPSSTPKSTSTTTTKETGSYSPTKTLSQIVNSDSVQVSSKFVEIETDGSVKKRRVLTEEQRQKIEQNRLRAIEIQKNLKQRENQKDDSTTSSKPVDNIRLNQNRPDSVVSSTKKFQPPPIRKQDYIEFDFATMKDTKGGFLQDEKTNTQGADEQTLQDWKNKQRELQKIRELPPPIDLQNIPRCRECQSMEVDANLMTNFNVRACRKCIKALPEKYSLLTKTECKEDYLLTEPELQDTTLLPRIEKPNPHGYSRMQLFVRFQVEEFAWKKWGGPEELDKEWERREENKVKRKEKKYHDQLREMRKRTRAEEYTRKLRDGKSLGERHVHDWSSPVNIDKHTIKRRCIDCGIETEEVVI.

Basic and acidic residues predominate over residues 20–29 (NRKRALERLQ). Disordered stretches follow at residues 20-101 (NRKR…EQRQ) and 116-156 (NLKQ…KFQP). Low complexity predominate over residues 41–62 (PSSTPKSTSTTTTKETGSYSPT). The segment covering 63-78 (KTLSQIVNSDSVQVSS) has biased composition (polar residues). Over residues 118–127 (KQRENQKDDS) the composition is skewed to basic and acidic residues. Positions 128 to 153 (TTSSKPVDNIRLNQNRPDSVVSSTKK) are enriched in polar residues. Zn(2+) contacts are provided by Cys223, Cys226, Cys244, and Cys247. A zinc finger spans residues 223-247 (CRECQSMEVDANLMTNFNVRACRKC).

This sequence belongs to the XPA family.

It is found in the nucleus. Its function is as follows. Involved in DNA excision repair. This chain is DNA repair protein RAD14 (RAD14), found in Candida albicans (strain SC5314 / ATCC MYA-2876) (Yeast).